The chain runs to 225 residues: Cytidylate kinase (225 aa).

12-20 (GPSGAGKGT) contributes to the ATP binding site.

This sequence belongs to the cytidylate kinase family. Type 1 subfamily.

It localises to the cytoplasm. It carries out the reaction CMP + ATP = CDP + ADP. It catalyses the reaction dCMP + ATP = dCDP + ADP. This chain is Cytidylate kinase, found in Pectobacterium atrosepticum (strain SCRI 1043 / ATCC BAA-672) (Erwinia carotovora subsp. atroseptica).